The sequence spans 2037 residues: Fatty acid synthase subunit beta (2037 aa).

The tract at residues 1–453 is acetyltransferase; that stretch reads MSTHRPFQLT…VYDTFDGSDF (453 aa). The active-site For acetyltransferase activity is the S261. An enoyl reductase region spans residues 465–798; the sequence is VKLITELPVH…GSRVMTSKES (334 aa). The interval 1132–1612 is dehydratase; that stretch reads GTELNWLQAF…LPNDTLQTTM (481 aa). The MaoC-like domain occupies 1506–1634; that stretch reads NGKTIEESVI…KVETRNVETE (129 aa). Residues 1613-1833 form a malonyl/palmitoyl transferase region; it reads EHVGMINGRK…MTMQVAVPRD (221 aa). Catalysis depends on S1796, which acts as the For malonyltransferase activity.

The protein belongs to the fungal fatty acid synthetase subunit beta family. As to quaternary structure, [Alpha(6)beta(6)] hexamers of two multifunctional subunits (alpha and beta).

The catalysed reaction is acetyl-CoA + n malonyl-CoA + 2n NADPH + 4n H(+) = a long-chain-acyl-CoA + n CoA + n CO2 + 2n NADP(+).. The enzyme catalyses holo-[ACP] + acetyl-CoA = acetyl-[ACP] + CoA. It catalyses the reaction holo-[ACP] + malonyl-CoA = malonyl-[ACP] + CoA. It carries out the reaction a (3R)-hydroxyacyl-[ACP] = a (2E)-enoyl-[ACP] + H2O. The catalysed reaction is a 2,3-saturated acyl-[ACP] + NAD(+) = a (2E)-enoyl-[ACP] + NADH + H(+). The enzyme catalyses (9Z)-octadecenoyl-[ACP] + H2O = (9Z)-octadecenoate + holo-[ACP] + H(+). In terms of biological role, fatty acid synthetase catalyzes the formation of long-chain fatty acids from acetyl-CoA, malonyl-CoA and NADPH. The beta subunit contains domains for: [acyl-carrier-protein] acetyltransferase and malonyltransferase, S-acyl fatty acid synthase thioesterase, enoyl-[acyl-carrier-protein] reductase, and 3-hydroxypalmitoyl-[acyl-carrier-protein] dehydratase. The sequence is that of Fatty acid synthase subunit beta (FAS1) from Candida albicans (Yeast).